A 313-amino-acid polypeptide reads, in one-letter code: MSKMMVFTGNANPDLARRVVRQLHIPLGDVSVGKFSDGEISTEINENVRGKDVFIIQPTCAPTNDNLMELVVMADAFRRSSASRITAVIPYFGYARQDRRPRSARVAISAKVVADMLTVVGIDRVLTVDLHADQIQGFFDIPVDNIYGSPVLVDDIEDQRFENLMIVSPDIGGVVRARAVAKSLGVDLGIIDKRREKANHSEVMHIIGDVEGRTCILVDDMVDTAGTLCHAAKALKEHGAAKVYAYCTHPVLSGRAIENIEKSVLDELVVTNTVPLSAAAQACDRIRQLDIAPVVAEAVRRISNEESISAMFR.

ATP contacts are provided by residues 37–39 (DGE) and 96–97 (RQ). Mg(2+) is bound by residues H131 and D170. The active site involves K193. D-ribose 5-phosphate is bound by residues R195, D219, and 223-227 (DTAGT).

It belongs to the ribose-phosphate pyrophosphokinase family. Class I subfamily. Homohexamer. Requires Mg(2+) as cofactor.

The protein localises to the cytoplasm. The enzyme catalyses D-ribose 5-phosphate + ATP = 5-phospho-alpha-D-ribose 1-diphosphate + AMP + H(+). The protein operates within metabolic intermediate biosynthesis; 5-phospho-alpha-D-ribose 1-diphosphate biosynthesis; 5-phospho-alpha-D-ribose 1-diphosphate from D-ribose 5-phosphate (route I): step 1/1. Its function is as follows. Involved in the biosynthesis of the central metabolite phospho-alpha-D-ribosyl-1-pyrophosphate (PRPP) via the transfer of pyrophosphoryl group from ATP to 1-hydroxyl of ribose-5-phosphate (Rib-5-P). The protein is Ribose-phosphate pyrophosphokinase of Pseudomonas putida (strain ATCC 47054 / DSM 6125 / CFBP 8728 / NCIMB 11950 / KT2440).